The chain runs to 177 residues: Protein FATTY ACID EXPORT 4, chloroplastic (177 aa).

The N-terminal 63 residues, 1–63 (MWSLALTLPS…AELSELAPVV (63 aa)), are a transit peptide targeting the chloroplast. A run of 3 helical transmembrane segments spans residues 85-105 (KGSL…YFLT), 111-131 (RVLG…VFGF), and 140-160 (VPAG…VMAY).

The protein belongs to the TMEM14 family.

The protein resides in the plastid. The protein localises to the chloroplast membrane. In terms of biological role, may be involved in free fatty acids export from the plastids. The sequence is that of Protein FATTY ACID EXPORT 4, chloroplastic from Arabidopsis thaliana (Mouse-ear cress).